We begin with the raw amino-acid sequence, 426 residues long: MTKFETVRGMKDYIGIDAEKIRYLESIFRDLAIKYGYSEIITPVVEEFKLFALKGGEELRETMYVFKDKADRELSLRPEITPGVARAYIQNLQSSPKPIRLFYFGTVYRYDEPQYGRYREFRQAGIEMIGDSSILADLEVLDLLYNFYDKLNLSNDITIKINNIGVFRKIMDKYNIEDNLQEHILHLIDKNKINEALDILEKNIKNKDIIDFFNKILTKKDTKLEDIESLAELEEVSRLDIKSEFLYLFRLSRILSNLNIKFKIDLGFVRGLAYYTGLIFEVLHPSVQFSIAGGGRYDKLIELYGGLPSPAIGFAIGVERTLLVIKDLKVEEPVNVIVIGMSEDAIPSMFMVSRILRKEEYKVVINTKDQPLSKLLPYYASQGFKLAIIIGKQELEKNMITVRNLITRKQISVPLENVEDAIKQTL.

This sequence belongs to the class-II aminoacyl-tRNA synthetase family.

Its subcellular location is the cytoplasm. It carries out the reaction tRNA(His) + L-histidine + ATP = L-histidyl-tRNA(His) + AMP + diphosphate + H(+). The sequence is that of Histidine--tRNA ligase from Saccharolobus shibatae (strain ATCC 51178 / DSM 5389 / JCM 8931 / NBRC 15437 / B12) (Sulfolobus shibatae).